Consider the following 382-residue polypeptide: Methylthioribose-1-phosphate isomerase (382 aa).

The Proton donor role is filled by Asp-257.

Belongs to the eIF-2B alpha/beta/delta subunits family. MtnA subfamily.

It localises to the cytoplasm. It is found in the nucleus. The enzyme catalyses 5-(methylsulfanyl)-alpha-D-ribose 1-phosphate = 5-(methylsulfanyl)-D-ribulose 1-phosphate. It participates in amino-acid biosynthesis; L-methionine biosynthesis via salvage pathway; L-methionine from S-methyl-5-thio-alpha-D-ribose 1-phosphate: step 1/6. Functionally, catalyzes the interconversion of methylthioribose-1-phosphate (MTR-1-P) into methylthioribulose-1-phosphate (MTRu-1-P). This Paracoccidioides brasiliensis (strain Pb18) protein is Methylthioribose-1-phosphate isomerase.